A 373-amino-acid polypeptide reads, in one-letter code: Dual-specificity RNA methyltransferase RlmN (373 aa).

The active-site Proton acceptor is the E91. A Radical SAM core domain is found at 97–339; that stretch reads EDDRGTLCIS…TTVRKTRGDD (243 aa). A disulfide bond links C104 and C344. [4Fe-4S] cluster is bound by residues C111, C115, and C118. Residues 165-166, S197, 219-221, and N301 each bind S-adenosyl-L-methionine; these read GE and SLH. The active-site S-methylcysteine intermediate is the C344.

This sequence belongs to the radical SAM superfamily. RlmN family. [4Fe-4S] cluster is required as a cofactor.

Its subcellular location is the cytoplasm. The enzyme catalyses adenosine(2503) in 23S rRNA + 2 reduced [2Fe-2S]-[ferredoxin] + 2 S-adenosyl-L-methionine = 2-methyladenosine(2503) in 23S rRNA + 5'-deoxyadenosine + L-methionine + 2 oxidized [2Fe-2S]-[ferredoxin] + S-adenosyl-L-homocysteine. It carries out the reaction adenosine(37) in tRNA + 2 reduced [2Fe-2S]-[ferredoxin] + 2 S-adenosyl-L-methionine = 2-methyladenosine(37) in tRNA + 5'-deoxyadenosine + L-methionine + 2 oxidized [2Fe-2S]-[ferredoxin] + S-adenosyl-L-homocysteine. Specifically methylates position 2 of adenine 2503 in 23S rRNA and position 2 of adenine 37 in tRNAs. m2A2503 modification seems to play a crucial role in the proofreading step occurring at the peptidyl transferase center and thus would serve to optimize ribosomal fidelity. In Paracidovorax citrulli (strain AAC00-1) (Acidovorax citrulli), this protein is Dual-specificity RNA methyltransferase RlmN.